The sequence spans 466 residues: Adenosylhomocysteinase (466 aa).

The substrate site is built by T57, D132, and E192. Residue 193–195 (TTT) participates in NAD(+) binding. K222 and D226 together coordinate substrate. NAD(+)-binding positions include N227, 256-261 (GYGDVG), E279, N314, 335-337 (IGH), and N380.

This sequence belongs to the adenosylhomocysteinase family. NAD(+) is required as a cofactor.

The protein resides in the cytoplasm. It carries out the reaction S-adenosyl-L-homocysteine + H2O = L-homocysteine + adenosine. It functions in the pathway amino-acid biosynthesis; L-homocysteine biosynthesis; L-homocysteine from S-adenosyl-L-homocysteine: step 1/1. May play a key role in the regulation of the intracellular concentration of adenosylhomocysteine. This Sinorhizobium medicae (strain WSM419) (Ensifer medicae) protein is Adenosylhomocysteinase.